We begin with the raw amino-acid sequence, 240 residues long: Ubiquinone biosynthesis O-methyltransferase (240 aa).

S-adenosyl-L-methionine contacts are provided by R44, G64, D85, and M129.

This sequence belongs to the methyltransferase superfamily. UbiG/COQ3 family.

The enzyme catalyses a 3-demethylubiquinol + S-adenosyl-L-methionine = a ubiquinol + S-adenosyl-L-homocysteine + H(+). It catalyses the reaction a 3-(all-trans-polyprenyl)benzene-1,2-diol + S-adenosyl-L-methionine = a 2-methoxy-6-(all-trans-polyprenyl)phenol + S-adenosyl-L-homocysteine + H(+). It functions in the pathway cofactor biosynthesis; ubiquinone biosynthesis. O-methyltransferase that catalyzes the 2 O-methylation steps in the ubiquinone biosynthetic pathway. This chain is Ubiquinone biosynthesis O-methyltransferase, found in Escherichia fergusonii (strain ATCC 35469 / DSM 13698 / CCUG 18766 / IAM 14443 / JCM 21226 / LMG 7866 / NBRC 102419 / NCTC 12128 / CDC 0568-73).